A 1235-amino-acid polypeptide reads, in one-letter code: Receptor-type adenylate cyclase ESAG 4 (1235 aa).

The interval 1-20 (MNMLHLSDRNASLAPSGGEH) is disordered. Residues 1 to 32 (MNMLHLSDRNASLAPSGGEHSLPTGGAVCRDA) are Cytoplasmic-facing. Residues 33–53 (MDILPVILRAPVALLLLLVVL) traverse the membrane as a helical segment. Over 54-858 (PQLSVGAEAN…SNAGRISGAS (805 aa)) the chain is Extracellular. N-linked (GlcNAc...) asparagine glycans are attached at residues N63, N90, N97, N362, N531, N566, N705, and N830. A helical transmembrane segment spans residues 859–879 (LVGIIIGGALALFLVVALGVV). The Cytoplasmic segment spans residues 880–1235 (PYFFLRNTVI…VSSQVEERLL (356 aa)). Positions 900–1054 (TLIFTDIESS…RTSNMAARTE (155 aa)) constitute a Guanylate cyclase domain. 2 residues coordinate Mg(2+): D905 and D948.

The protein belongs to the adenylyl cyclase class-3 family. Requires Mg(2+) as cofactor.

Its subcellular location is the membrane. It catalyses the reaction ATP = 3',5'-cyclic AMP + diphosphate. In terms of biological role, could act as a receptor for an unknown ligand. This Trypanosoma brucei brucei protein is Receptor-type adenylate cyclase ESAG 4 (ESAG4).